The following is a 469-amino-acid chain: GTPase Der (469 aa).

EngA-type G domains follow at residues 3-167 and 175-348; these read PTVA…PDEV and PKFA…RAAM. GTP is bound by residues 9–16, 56–60, 119–122, 181–188, 228–232, and 293–296; these read GRPNVGKS, DTGGF, NKAE, DTAGV, and NKWD. The KH-like domain occupies 349-433; sequence SKLATPKLTR…PLRVQYKSSE (85 aa). The disordered stretch occupies residues 429-469; the sequence is YKSSENPFDNDEKDKPRAKPKPMSKMRGREKEVRYGKNSKK.

The protein belongs to the TRAFAC class TrmE-Era-EngA-EngB-Septin-like GTPase superfamily. EngA (Der) GTPase family. As to quaternary structure, associates with the 50S ribosomal subunit.

Functionally, GTPase that plays an essential role in the late steps of ribosome biogenesis. The polypeptide is GTPase Der (Chromobacterium violaceum (strain ATCC 12472 / DSM 30191 / JCM 1249 / CCUG 213 / NBRC 12614 / NCIMB 9131 / NCTC 9757 / MK)).